Consider the following 240-residue polypeptide: Large ribosomal subunit protein bL25 (240 aa).

Disordered stretches follow at residues 1–20 (MAEN…GPAR) and 204–240 (GAAP…KAKK). Positions 204-229 (GAAPAAGAAAPAGGAAPAAGAAPAKG) are enriched in low complexity. The segment covering 230-240 (GEAKGGDKAKK) has biased composition (basic and acidic residues).

Belongs to the bacterial ribosomal protein bL25 family. CTC subfamily. In terms of assembly, part of the 50S ribosomal subunit; part of the 5S rRNA/L5/L18/L25 subcomplex. Contacts the 5S rRNA. Binds to the 5S rRNA independently of L5 and L18.

Its function is as follows. This is one of the proteins that binds to the 5S RNA in the ribosome where it forms part of the central protuberance. The chain is Large ribosomal subunit protein bL25 from Anaeromyxobacter sp. (strain K).